The following is a 419-amino-acid chain: Putative zinc metalloprotease SPs1691 (419 aa).

His18 is a Zn(2+) binding site. Residue Glu19 is part of the active site. Residue His22 participates in Zn(2+) binding. A run of 4 helical transmembrane segments spans residues 169–191 (LITNFAGPMNNFILGIVVFILLV), 301–323 (LAWSGAFTILNALKGLITGFSLN), 343–365 (LESVLSLMAMLSINLGIFNLIPI), and 392–411 (AYITLAGVAIMVVLMIAVTW). Positions 175-274 (GPMNNFILGI…LKTVAVKPQK (100 aa)) constitute a PDZ domain.

The protein belongs to the peptidase M50B family. Zn(2+) serves as cofactor.

It is found in the cell membrane. The protein is Putative zinc metalloprotease SPs1691 (eep) of Streptococcus pyogenes serotype M3 (strain SSI-1).